Reading from the N-terminus, the 229-residue chain is MTPKLIVALDFDNQDNAIQLVEKLDPNHCALKVGSELFTLLGPQFVKALVRREFKVFLDLKFHDIPNTVAKACHSAAELGVWMINVHAIGGLKMLQAARESLKTYGKDRPLLIAVTVLTSFEEGELASVGISNTLPEQATHLAMLAREAGLDGVVSSAHEVKIIKQKCGENFITVTPGIRLPNNLKDDQSRVMTPQQAIREGSDFLVIGRPITQASNPYEVVSALLRDL.

Substrate-binding positions include aspartate 10, lysine 32, 59–68 (DLKFHDIPNT), threonine 119, arginine 180, glutamine 189, glycine 209, and arginine 210. Residue lysine 61 is the Proton donor of the active site.

It belongs to the OMP decarboxylase family. Type 1 subfamily. As to quaternary structure, homodimer.

The catalysed reaction is orotidine 5'-phosphate + H(+) = UMP + CO2. The protein operates within pyrimidine metabolism; UMP biosynthesis via de novo pathway; UMP from orotate: step 2/2. Catalyzes the decarboxylation of orotidine 5'-monophosphate (OMP) to uridine 5'-monophosphate (UMP). The polypeptide is Orotidine 5'-phosphate decarboxylase (Legionella pneumophila subsp. pneumophila (strain Philadelphia 1 / ATCC 33152 / DSM 7513)).